A 375-amino-acid chain; its full sequence is 2-isopropylmalate synthase (375 aa).

The Pyruvate carboxyltransferase domain maps to 1 to 124 (GRTSIDNLCR…FTNIKHNELY (124 aa)). Mn(2+) is bound by residues histidine 59, histidine 61, and asparagine 95. The regulatory domain stretch occupies residues 250-375 (QLKYFSIHSG…SKIKNIKNKK (126 aa)).

This sequence belongs to the alpha-IPM synthase/homocitrate synthase family. LeuA type 1 subfamily. Homodimer.

The protein localises to the cytoplasm. The catalysed reaction is 3-methyl-2-oxobutanoate + acetyl-CoA + H2O = (2S)-2-isopropylmalate + CoA + H(+). It participates in amino-acid biosynthesis; L-leucine biosynthesis; L-leucine from 3-methyl-2-oxobutanoate: step 1/4. Its function is as follows. Catalyzes the condensation of the acetyl group of acetyl-CoA with 3-methyl-2-oxobutanoate (2-ketoisovalerate) to form 3-carboxy-3-hydroxy-4-methylpentanoate (2-isopropylmalate). The protein is 2-isopropylmalate synthase of Buchnera aphidicola subsp. Thelaxes suberi.